A 399-amino-acid polypeptide reads, in one-letter code: Nicotinate phosphoribosyltransferase (399 aa).

A Phosphohistidine; by autocatalysis modification is found at histidine 221.

The protein belongs to the NAPRTase family. In terms of processing, transiently phosphorylated on a His residue during the reaction cycle. Phosphorylation strongly increases the affinity for substrates and increases the rate of nicotinate D-ribonucleotide production. Dephosphorylation regenerates the low-affinity form of the enzyme, leading to product release.

It catalyses the reaction nicotinate + 5-phospho-alpha-D-ribose 1-diphosphate + ATP + H2O = nicotinate beta-D-ribonucleotide + ADP + phosphate + diphosphate. The protein operates within cofactor biosynthesis; NAD(+) biosynthesis; nicotinate D-ribonucleotide from nicotinate: step 1/1. Catalyzes the synthesis of beta-nicotinate D-ribonucleotide from nicotinate and 5-phospho-D-ribose 1-phosphate at the expense of ATP. This chain is Nicotinate phosphoribosyltransferase, found in Buchnera aphidicola subsp. Acyrthosiphon pisum (strain 5A).